Here is a 122-residue protein sequence, read N- to C-terminus: Large ribosomal subunit protein uL18 (122 aa).

Residues 1-24 (MSTLSRKQQTQKRHRRLRRHLSGT) form a disordered region. Basic residues predominate over residues 9 to 21 (QTQKRHRRLRRHL).

The protein belongs to the universal ribosomal protein uL18 family. In terms of assembly, part of the 50S ribosomal subunit; part of the 5S rRNA/L5/L18/L25 subcomplex. Contacts the 5S and 23S rRNAs.

In terms of biological role, this is one of the proteins that bind and probably mediate the attachment of the 5S RNA into the large ribosomal subunit, where it forms part of the central protuberance. The polypeptide is Large ribosomal subunit protein uL18 (Synechococcus sp. (strain WH7803)).